Here is a 479-residue protein sequence, read N- to C-terminus: PTS system sucrose-specific EIIBC component (479 aa).

The region spanning 4–87 (PAVAKELLTL…AKLTGMSEMS (84 aa)) is the PTS EIIB type-1 domain. The Phosphocysteine intermediate; for EIIB activity role is filled by Cys-26. 11 helical membrane-spanning segments follow: residues 112–132 (IFVP…IYNL), 158–178 (MINT…AFSA), 182–202 (FGGN…PDLL), 204–224 (GWGF…ILGF), 232–252 (QGSV…ELGL), 264–284 (LTPL…VGPF), 303–323 (AGFV…ITGM), 345–365 (FIFP…LAVG), 376–396 (IAIP…MFGV), 403–423 (PFIA…MFNV), and 448–468 (IAGM…LGIG). In terms of domain architecture, PTS EIIC type-1 spans 120-477 (IVAGGLLMGI…GDRAKVGKKA (358 aa)).

The protein localises to the cell inner membrane. The enzyme catalyses N(pros)-phospho-L-histidyl-[protein](out) + sucrose = sucrose 6(G)-phosphate(in) + L-histidyl-[protein]. Functionally, the phosphoenolpyruvate-dependent sugar phosphotransferase system (sugar PTS), a major carbohydrate active transport system, catalyzes the phosphorylation of incoming sugar substrates concomitantly with their translocation across the cell membrane. This system is involved in sucrose transport. The polypeptide is PTS system sucrose-specific EIIBC component (Vibrio alginolyticus).